The primary structure comprises 454 residues: UDP-N-acetylmuramate--L-alanine ligase (454 aa).

An ATP-binding site is contributed by 113 to 119 (GSHGKTT).

Belongs to the MurCDEF family.

It localises to the cytoplasm. It carries out the reaction UDP-N-acetyl-alpha-D-muramate + L-alanine + ATP = UDP-N-acetyl-alpha-D-muramoyl-L-alanine + ADP + phosphate + H(+). Its pathway is cell wall biogenesis; peptidoglycan biosynthesis. Its function is as follows. Cell wall formation. This is UDP-N-acetylmuramate--L-alanine ligase from Sulfurihydrogenibium sp. (strain YO3AOP1).